Consider the following 548-residue polypeptide: Chaperonin GroEL (548 aa).

ATP is bound by residues 30 to 33 (TLGP), Lys51, 87 to 91 (DGTTT), Gly415, and Asp495.

This sequence belongs to the chaperonin (HSP60) family. Forms a cylinder of 14 subunits composed of two heptameric rings stacked back-to-back. Interacts with the co-chaperonin GroES.

It is found in the cytoplasm. It catalyses the reaction ATP + H2O + a folded polypeptide = ADP + phosphate + an unfolded polypeptide.. Together with its co-chaperonin GroES, plays an essential role in assisting protein folding. The GroEL-GroES system forms a nano-cage that allows encapsulation of the non-native substrate proteins and provides a physical environment optimized to promote and accelerate protein folding. The polypeptide is Chaperonin GroEL (Idiomarina loihiensis (strain ATCC BAA-735 / DSM 15497 / L2-TR)).